Reading from the N-terminus, the 24-residue chain is RuBisCO large subunit-binding protein subunit beta, chloroplastic (24 aa).

The protein belongs to the chaperonin (HSP60) family. In terms of assembly, oligomer of probably six alpha and six beta subunits.

The protein resides in the plastid. It is found in the chloroplast. In terms of biological role, this protein binds RuBisCO small and large subunits and is implicated in the assembly of the enzyme oligomer. The sequence is that of RuBisCO large subunit-binding protein subunit beta, chloroplastic from Populus euphratica (Euphrates poplar).